The following is a 922-amino-acid chain: Probable outer membrane protein pmp1 (922 aa).

An N-terminal signal peptide occupies residues 1–26; that stretch reads MRFSLCGFPLVFSFTLLSVFDTSLSA. One can recognise an Autotransporter domain in the interval 620-922; the sequence is SLQTDRGLWI…NINCGSKFRF (303 aa).

This sequence belongs to the PMP outer membrane protein family.

The protein resides in the secreted. Its subcellular location is the cell wall. The protein localises to the cell outer membrane. This is Probable outer membrane protein pmp1 (pmp1) from Chlamydia pneumoniae (Chlamydophila pneumoniae).